The primary structure comprises 1198 residues: Sterol 3-beta-glucosyltransferase (1198 aa).

A compositionally biased stretch (polar residues) spans 1–11 (MPITQIISASD). 2 disordered regions span residues 1 to 89 (MPIT…DNAD) and 124 to 162 (SQVD…PEVP). A compositionally biased stretch (basic residues) spans 35–51 (RHHRLSRSLSKFKRWRG). The segment covering 52–67 (RSNSSLSMGSSEQQEL) has biased composition (low complexity). At serine 76 the chain carries Phosphoserine. Basic and acidic residues predominate over residues 146–162 (VKSKKENLKTKSHPEVP). Positions 187-236 (AKLRQRFCLDEQEPFLNDFPAWLLKDVLVQGHIFITTKHFLFFAYLPKNP) constitute a GRAM 1 domain. In terms of domain architecture, PH spans 238 to 336 (SVKMSGNLNI…WVNALKKEQF (99 aa)). Residues 427–465 (KSSFGKETPATAEQKNNGEDSKYLNVPTSAVPSSENGKK) are disordered. Residues 452 to 461 (VPTSAVPSSE) are compositionally biased toward polar residues. Residues 570-636 (ERFRYHFKFN…VDVETCYKEK (67 aa)) enclose the GRAM 2 domain. At serine 693 the chain carries Phosphoserine. Residues serine 749, arginine 750, aspartate 752, asparagine 1025, asparagine 1053, valine 1054, histidine 1056, histidine 1069, serine 1072, glycine 1073, threonine 1074, aspartate 1093, and glutamine 1094 each coordinate UDP-alpha-D-glucose.

This sequence belongs to the glycosyltransferase 28 family.

The protein localises to the cytoplasm. The protein resides in the membrane. The catalysed reaction is a sterol + UDP-alpha-D-glucose = a sterol 3-beta-D-glucoside + UDP + H(+). It carries out the reaction ergosterol + UDP-alpha-D-glucose = ergosteryl 3-beta-D-glucoside + UDP + H(+). Functionally, sterol glycosyltransferase responsible for the glycosylation of ergosterol to form ergosterol-glucoside. Also shows activity in vitro on other sterols such as cholesterol, beta-sitosterol, stigmasterol and tomatidine. In contrasts to what is observed in Pichia pastoris and Aspergillus oryzae, is not involved in cytoplasm to vacuole transport (Cvt), pexophagy or nonselective autophagy in Saccharomyces cerevisiae. This Saccharomyces cerevisiae (strain YJM789) (Baker's yeast) protein is Sterol 3-beta-glucosyltransferase.